Here is a 2867-residue protein sequence, read N- to C-terminus: Reticulocyte-binding protein 2 (2867 aa).

Residues methionine 1 to cysteine 21 form the signal peptide. Over asparagine 22 to arginine 2805 the chain is Extracellular. Disordered stretches follow at residues lysine 52–asparagine 73, glutamate 2650–proline 2682, and aspartate 2712–glutamate 2799. The segment covering asparagine 61–asparagine 73 has biased composition (low complexity). Over residues lysine 2659–alanine 2674 the composition is skewed to basic and acidic residues. A compositionally biased stretch (polar residues) spans aspartate 2725–tyrosine 2736. Over residues glutamate 2743–histidine 2754 the composition is skewed to acidic residues. The segment covering aspartate 2755 to glutamate 2799 has biased composition (basic and acidic residues). 7 consecutive repeat copies span residues histidine 2758–threonine 2761, histidine 2762–threonine 2765, histidine 2766–threonine 2769, histidine 2770–threonine 2773, histidine 2774–threonine 2777, histidine 2778–threonine 2781, and histidine 2782–threonine 2785. A 7 X 4 AA tandem repeats of H-D-D-T region spans residues histidine 2758 to threonine 2785. The chain crosses the membrane as a helical span at residues leucine 2806–lysine 2826. The Cytoplasmic portion of the chain corresponds to aspartate 2827–aspartate 2867.

It is found in the cell membrane. Functionally, involved in reticulocyte adhesion. Specifically binds to human reticulocyte cells. In Plasmodium vivax (strain Belem), this protein is Reticulocyte-binding protein 2 (RBP-2).